The chain runs to 191 residues: Small ribosomal subunit protein eS7 (191 aa).

At Met1 the chain carries N-acetylmethionine.

This sequence belongs to the eukaryotic ribosomal protein eS7 family.

This is Small ribosomal subunit protein eS7 (RPS7) from Brassica oleracea (Wild cabbage).